Here is a 342-residue protein sequence, read N- to C-terminus: NLP effector protein Pc107869 (342 aa).

The signal sequence occupies residues 1-19 (MKTGFFLFAACAALVAVQA). The N-linked (GlcNAc...) asparagine glycan is linked to N24. Residues 41–125 (APRTKAPPTK…PTPDPGPWEA (85 aa)) form a disordered region. Low complexity predominate over residues 55–75 (QQSSLSGSQEQQQEQIETPAP). Residues 93–121 (TPAPTPAPTPAPTPAPTPAPTPAPTPDPG) are compositionally biased toward pro residues. The Hepta-peptide GHRHDWE motif motif lies at 226–232 (GHRHDWE).

This sequence belongs to the Necrosis inducing protein (NPP1) family.

It localises to the secreted. Functionally, secreted effector that contributes strongly to virulence during infection by P.capsici. Induces cell death in the Solanaceae, including Nicotiana benthamiana. The chain is NLP effector protein Pc107869 from Phytophthora capsici.